A 404-amino-acid chain; its full sequence is Mitochondrial potassium channel (404 aa).

Residues 1–30 (MTGRSRVLAMRHVGGVSPVLVRRDLFLTRT) constitute a mitochondrion transit peptide. Topologically, residues 31–196 (LCSHGPSQPR…KERTRAERTK (166 aa)) are mitochondrial matrix. Phosphoserine is present on Ser65. Residues 111 to 138 (VREAREDLESQQTKLKEVRDRLDRISRD) are a coiled coil. A helical transmembrane segment spans residues 197 to 217 (NWSLIGSVLGALIGVAGSTYV). The Mitochondrial intermembrane portion of the chain corresponds to 218–380 (NRVRLQELKA…LEAQVNRNTV (163 aa)). The chain crosses the membrane as a helical span at residues 381–401 (YGTLVTCATFVAVLPVLYMLF). Residues 402–404 (RAS) are Mitochondrial matrix-facing.

The mitochondrial potassium channel (mitoK(ATP)) forms a heteromultimer.

The protein localises to the mitochondrion inner membrane. It catalyses the reaction K(+)(in) = K(+)(out). With respect to regulation, channel activity inhibited by ATP via ABCB8/MITOSUR subunit. Pore-forming subunit of the mitochondrial ATP-gated potassium channel (mitoK(ATP)). Together with ATP-binding subunit ABCB8/MITOSUR of the mitoK(ATP) channel, mediates ATP-dependent K(+) currents across the mitochondrial inner membrane. An increase in ATP intracellular levels closes the channel, inhibiting K(+) transport, whereas a decrease in ATP levels enhances K(+) uptake in the mitochondrial matrix. May contribute to the homeostatic control of cellular metabolism under stress conditions by regulating the mitochondrial matrix volume. This chain is Mitochondrial potassium channel, found in Bos taurus (Bovine).